A 353-amino-acid polypeptide reads, in one-letter code: Photosystem II protein D1 (353 aa).

Thr-2 is subject to N-acetylthreonine. Thr-2 carries the post-translational modification Phosphothreonine. 3 helical membrane-spanning segments follow: residues 29-46, 118-133, and 142-156; these read YIGW…TATS, HFLL…EWEL, and WIAV…AATA. His-118 serves as a coordination point for chlorophyll a. Position 126 (Tyr-126) interacts with pheophytin a. Positions 170 and 189 each coordinate [CaMn4O5] cluster. The chain crosses the membrane as a helical span at residues 197-218; that stretch reads FHMLGVAGVFGGSLFSAMHGSL. Chlorophyll a is bound at residue His-198. A quinone contacts are provided by residues His-215 and 264–265; that span reads SF. Fe cation is bound at residue His-215. Residue His-272 coordinates Fe cation. The helical transmembrane segment at 274 to 288 threads the bilayer; that stretch reads FLAAWPVVGIWFTAL. The [CaMn4O5] cluster site is built by His-332, Glu-333, Asp-342, and Ala-344. Residues 345–353 constitute a propeptide that is removed on maturation; the sequence is AIEAPSTNG.

This sequence belongs to the reaction center PufL/M/PsbA/D family. As to quaternary structure, PSII is composed of 1 copy each of membrane proteins PsbA, PsbB, PsbC, PsbD, PsbE, PsbF, PsbH, PsbI, PsbJ, PsbK, PsbL, PsbM, PsbT, PsbX, PsbY, PsbZ, Psb30/Ycf12, at least 3 peripheral proteins of the oxygen-evolving complex and a large number of cofactors. It forms dimeric complexes. Requires The D1/D2 heterodimer binds P680, chlorophylls that are the primary electron donor of PSII, and subsequent electron acceptors. It shares a non-heme iron and each subunit binds pheophytin, quinone, additional chlorophylls, carotenoids and lipids. D1 provides most of the ligands for the Mn4-Ca-O5 cluster of the oxygen-evolving complex (OEC). There is also a Cl(-1) ion associated with D1 and D2, which is required for oxygen evolution. The PSII complex binds additional chlorophylls, carotenoids and specific lipids. as cofactor. Post-translationally, tyr-161 forms a radical intermediate that is referred to as redox-active TyrZ, YZ or Y-Z. C-terminally processed by CTPA; processing is essential to allow assembly of the oxygen-evolving complex and thus photosynthetic growth.

It localises to the plastid. The protein resides in the chloroplast thylakoid membrane. The catalysed reaction is 2 a plastoquinone + 4 hnu + 2 H2O = 2 a plastoquinol + O2. Photosystem II (PSII) is a light-driven water:plastoquinone oxidoreductase that uses light energy to abstract electrons from H(2)O, generating O(2) and a proton gradient subsequently used for ATP formation. It consists of a core antenna complex that captures photons, and an electron transfer chain that converts photonic excitation into a charge separation. The D1/D2 (PsbA/PsbD) reaction center heterodimer binds P680, the primary electron donor of PSII as well as several subsequent electron acceptors. This chain is Photosystem II protein D1, found in Nicotiana debneyi (Debney's tobacco).